Reading from the N-terminus, the 1212-residue chain is Solute carrier family 12 member 2 (1212 aa).

Met1 carries the N-acetylmethionine modification. Residues Met1–Gly286 lie on the Cytoplasmic side of the membrane. 3 disordered regions span residues Gly36–Phe81, Gly112–Arg138, and Ser150–Ser193. Ser77 and Ser79 each carry phosphoserine. The short motif at Arg80–Val83 is the RFXV motif 1 element. Basic and acidic residues predominate over residues Glu127 to Gly137. An RFXV motif 2 motif is present at residues Arg138 to Val141. The segment covering Ser150–Ala160 has biased composition (low complexity). Phosphothreonine; by OXSR1 and STK39 is present on residues Thr203, Thr207, and Thr212. Phosphothreonine occurs at positions 217 and 230. Position 242 is a phosphoserine (Ser242). Thr266 carries the phosphothreonine modification. Residues Trp287–Gly316 form a discontinuously helical membrane-spanning segment. Leu297 provides a ligand contact to Na(+). K(+)-binding residues include Asn298 and Ile299. Position 300 (Trp300) interacts with Na(+). Chloride contacts are provided by Gly301, Val302, and Met303. Residues Ile317 to Leu336 traverse the membrane as a helical segment. At Ser337–Ala367 the chain is on the cytoplasmic side. The helical transmembrane segment at Ile368–Leu395 threads the bilayer. Phe372 lines the chloride pocket. Tyr383 contacts K(+). Residues Lys396–Glu405 lie on the Extracellular side of the membrane. Residues Ile406–Glu429 traverse the membrane as a helical segment. Over Trp430 to Ala432 the chain is Cytoplasmic. Residues Lys433–Phe454 traverse the membrane as a helical segment. The Extracellular portion of the chain corresponds to Ile455–Thr486. The chain crosses the membrane as a discontinuously helical span at residues Phe487–Gly504. K(+)-binding residues include Pro496, Ala497, and Thr499. Chloride contacts are provided by Pro496 and Ala497. The chloride site is built by Gly500 and Ile501. Residues Ala505 to Pro519 lie on the Cytoplasmic side of the membrane. A helical membrane pass occupies residues Lys520–Gly541. The Extracellular segment spans residues Ser542–Gly598. Asn553 and Asn562 each carry an N-linked (GlcNAc...) asparagine glycan. 2 disulfide bridges follow: Cys563–Cys568 and Cys577–Cys582. The chain crosses the membrane as a helical span at residues Phe599 to Pro623. Na(+) contacts are provided by Ala610, Ser613, and Ser614. At Lys624–Pro651 the chain is on the cytoplasmic side. 2 helical membrane passes run Leu652–Asn672 and Val673–Phe691. Positions 682 and 686 each coordinate chloride. Residues Ser692–Trp714 are Cytoplasmic-facing. A run of 2 helical transmembrane segments spans residues Ile715–Trp732 and Trp733–Leu745. Topologically, residues Tyr746–Ser1212 are cytoplasmic. Residues Ser761 to Ser778 are scissor helix. Residues Ser940 and Ser944 each carry the phosphoserine modification. The segment covering Leu962–Glu978 has biased composition (basic and acidic residues). A disordered region spans residues Leu962 to Leu989. A Phosphoserine modification is found at Ser994.

Belongs to the SLC12A transporter family. Homodimer; adopts a domain-swap conformation at the scissor helices connecting the transmembrane domain and C-terminal domain. Post-translationally, phosphorylated at Thr-203, Thr-207 and Thr-212 by OXSR1/OSR1 and STK39/SPAK downstream of WNK kinases (WNK1, WNK2, WNK3 or WNK4), promoting its activity. In terms of tissue distribution, expressed in many tissues.

The protein resides in the basolateral cell membrane. The enzyme catalyses K(+)(out) + 2 chloride(out) + Na(+)(out) = K(+)(in) + 2 chloride(in) + Na(+)(in). Activated following phosphorylation by OXSR1/OSR1 and STK39/SPAK downstream of WNK kinases (WNK1, WNK2, WNK3 or WNK4). Inhibited by bumetanide. Inhibited by furosemide. Its function is as follows. Cation-chloride cotransporter which mediates the electroneutral transport of chloride, potassium and/or sodium ions across the membrane. Plays a vital role in the regulation of ionic balance and cell volume. The polypeptide is Solute carrier family 12 member 2 (SLC12A2) (Homo sapiens (Human)).